A 1138-amino-acid polypeptide reads, in one-letter code: MSVPDYMQCAEDHQTLLVVVQPVGIVSEENFFRIYKRISSVSQISVRDSQRALYIRYRHHYPPENSEWGDFQTHRKVVGLITITDCFSAKDWPQIFEKFHVQKEIYGSTLYDSRLFVFGLQGEIAEQPRTDVAFYPSYEDCATVEKRIEDFVESLFIVLESKRLDRATDKSGDKIPLLCVPFEKKDFVGLDTDSRHYKKRCQGRMRKHVGDLCLQAGMLQDSLVHYHMSVELLRSVNDFLWLGAALEGLCSASVIYHYPGGTGGKAGARRFPGSALPAEAANRHRPGALTTNGINADTSTEIGRAKNCLSPEDIIEKYKEAISYYSKYKNAGVIELEACVKAVRVLAIQKRSMEASEFLQNAVYINLRQLSEEEKIQRYSILSELYELIGFHRKSAFFKRVAAMQCVAPSISEPGWRACYKLLLETLPGYSLSLDPQDFNKGTHRGWAAVQMRLLHELVYASRRMGNPALSVRHLSFLLQTMLDFLSDQEKKDVTQSLENYTSKCPGTMELLTLPDGLTLPPVPFTKLPIVRRVKLLDLPASLRPQKMKSSLGPSVSAKSPFIYSPIIAHSRGEERSKKIDFQWVQGDVCEVQLMVYNPMPFELRVENMGLLTSGVEFESLPAALSLPAESGLYPVTLVGVPQTTGTITVSGYHTTVFGVFSDCLLDSLPGIKTSGSTVEVIPALPRLQISTSLPRSAHSLQPSSGDKISTNVSVQLYNGETQQLVVRLENIGMEPLEKLEVTSKILTTKEKLYGDFLSWKLEDTLAQFPLQPGKVATFTISIKVKLDFSCQENLLQDLSDDGISVSGFPLCSPFRQVVRPRVESKPVNAAEGGRPGEPCHVKTLEAVLNFKYSGGPGHVEGYYRNLALGLHVEVEPSVFFTRVSTLPATSTRQCHLLLDVFNATEHELSVGARSDEELILHAGECQRMAIQVDKFNFESFPESPADKGQFANSKHLEEERQEARGLEINSKLDIHWTIPSLKRTGEASVEGLLNQLVLEHLQLAPLLWDVLVDGQPCDCQAAACRVGDPVRLEVRLTNRSPRSVGPFALSVVPFQDHQNGVHSYDLRHAVSFVGSGTFYLDKVQPSGQAACLGALLFLYTGDFFLHIRFHEDGPSKELPPSWFCLPSVHVRALEAQA.

Residues serine 557 and serine 944 each carry the phosphoserine modification.

It belongs to the NIBP family. As to quaternary structure, component of the multisubunit TRAPP (transport protein particle) complex, which includes at least TRAPPC2, TRAPPC2L, TRAPPC3, TRAPPC3L, TRAPPC4, TRAPPC5, TRAPPC8, TRAPPC9, TRAPPC10, TRAPPC11 and TRAPPC12. Directly interacts with IKBKB and MAP3K14.

The protein resides in the golgi apparatus. It localises to the cis-Golgi network. The protein localises to the endoplasmic reticulum. Its subcellular location is the cytoplasm. Functionally, functions as an activator of NF-kappa-B through increased phosphorylation of the IKK complex. May function in neuronal cells differentiation. May play a role in vesicular transport from endoplasmic reticulum to Golgi. In Bos taurus (Bovine), this protein is Trafficking protein particle complex subunit 9 (TRAPPC9).